The following is a 288-amino-acid chain: Phosphatidylserine decarboxylase proenzyme (288 aa).

Active-site charge relay system; for autoendoproteolytic cleavage activity residues include D90, H147, and S254. S254 (schiff-base intermediate with substrate; via pyruvic acid; for decarboxylase activity) is an active-site residue. The residue at position 254 (S254) is a Pyruvic acid (Ser); by autocatalysis.

Belongs to the phosphatidylserine decarboxylase family. PSD-B subfamily. Prokaryotic type I sub-subfamily. Heterodimer of a large membrane-associated beta subunit and a small pyruvoyl-containing alpha subunit. It depends on pyruvate as a cofactor. In terms of processing, is synthesized initially as an inactive proenzyme. Formation of the active enzyme involves a self-maturation process in which the active site pyruvoyl group is generated from an internal serine residue via an autocatalytic post-translational modification. Two non-identical subunits are generated from the proenzyme in this reaction, and the pyruvate is formed at the N-terminus of the alpha chain, which is derived from the carboxyl end of the proenzyme. The autoendoproteolytic cleavage occurs by a canonical serine protease mechanism, in which the side chain hydroxyl group of the serine supplies its oxygen atom to form the C-terminus of the beta chain, while the remainder of the serine residue undergoes an oxidative deamination to produce ammonia and the pyruvoyl prosthetic group on the alpha chain. During this reaction, the Ser that is part of the protease active site of the proenzyme becomes the pyruvoyl prosthetic group, which constitutes an essential element of the active site of the mature decarboxylase.

Its subcellular location is the cell membrane. The catalysed reaction is a 1,2-diacyl-sn-glycero-3-phospho-L-serine + H(+) = a 1,2-diacyl-sn-glycero-3-phosphoethanolamine + CO2. The protein operates within phospholipid metabolism; phosphatidylethanolamine biosynthesis; phosphatidylethanolamine from CDP-diacylglycerol: step 2/2. In terms of biological role, catalyzes the formation of phosphatidylethanolamine (PtdEtn) from phosphatidylserine (PtdSer). This chain is Phosphatidylserine decarboxylase proenzyme, found in Hamiltonella defensa subsp. Acyrthosiphon pisum (strain 5AT).